Consider the following 94-residue polypeptide: uncharacterized protein (94 aa).

The next 2 membrane-spanning stretches (helical) occupy residues Thr9–Thr29 and Leu34–Val54.

The protein resides in the cell membrane. This is an uncharacterized protein from Bacillus subtilis (strain 168).